The sequence spans 158 residues: Ribosome-binding factor A (158 aa).

Positions 114 to 158 (AKDAEVRQVSTGAQYAGDADPYRKPEDEDEETDGSSEKNEGPASA) are disordered. The segment covering 148-158 (SSEKNEGPASA) has biased composition (basic and acidic residues).

It belongs to the RbfA family. In terms of assembly, monomer. Binds 30S ribosomal subunits, but not 50S ribosomal subunits or 70S ribosomes.

Its subcellular location is the cytoplasm. Functionally, one of several proteins that assist in the late maturation steps of the functional core of the 30S ribosomal subunit. Associates with free 30S ribosomal subunits (but not with 30S subunits that are part of 70S ribosomes or polysomes). Required for efficient processing of 16S rRNA. May interact with the 5'-terminal helix region of 16S rRNA. This chain is Ribosome-binding factor A, found in Streptomyces griseus subsp. griseus (strain JCM 4626 / CBS 651.72 / NBRC 13350 / KCC S-0626 / ISP 5235).